The following is a 496-amino-acid chain: UDP-glycosyltransferase 84A2 (496 aa).

The active-site Proton acceptor is H23. H23 lines the an anthocyanidin pocket. UDP-alpha-D-glucose is bound by residues Q352, H367, W370, N371, S372, and E375. G390 is a binding site for an anthocyanidin. Residues D391 and Q392 each coordinate UDP-alpha-D-glucose.

The protein belongs to the UDP-glycosyltransferase family. Expressed in roots, cotyledons, leaf veins and trichomes.

It carries out the reaction (E)-sinapate + UDP-alpha-D-glucose = 1-O-(trans-sinapoyl)-beta-D-glucose + UDP. In terms of biological role, sinapate glucosyltransferase (SGT) required for the biosynthesis of the glucose ester sinapoylglucose and subsequently sinapoylmalate and sinapoylcholine. Is the major SGT activity in plant. Plays an important role in sinapoylation of anthocyanins. Sinapoylglucose produced by UGT84A2 is a significant source of sinapoyl moieties for anthocyanins. Indole-3-butyric acid (IBA)-specific glucosyltransferase that catalyzes the glucosylation of the auxin IBA, but not indole-3-acetic acid (IAA). May be involved in flowering regulation through IBA-mediated transcriptional repression of the auxin-response factors ARF6 and ARF8 and downstream flowering pathway genes. Can glucosylate the phytotoxic xenobiotic compound 2,4,5-trichlorophenol (TCP). The protein is UDP-glycosyltransferase 84A2 of Arabidopsis thaliana (Mouse-ear cress).